A 578-amino-acid polypeptide reads, in one-letter code: Phosphoenolpyruvate-protein phosphotransferase (578 aa).

H195 acts as the Tele-phosphohistidine intermediate in catalysis. The phosphoenolpyruvate site is built by R302 and R338. The Mg(2+) site is built by E437 and D461. Phosphoenolpyruvate contacts are provided by residues 460-461 (ND) and R471. The Proton donor role is filled by C508.

This sequence belongs to the PEP-utilizing enzyme family. As to quaternary structure, homodimer. Requires Mg(2+) as cofactor.

It is found in the cytoplasm. The enzyme catalyses L-histidyl-[protein] + phosphoenolpyruvate = N(pros)-phospho-L-histidyl-[protein] + pyruvate. Functionally, general (non sugar-specific) component of the phosphoenolpyruvate-dependent sugar phosphotransferase system (sugar PTS). This major carbohydrate active-transport system catalyzes the phosphorylation of incoming sugar substrates concomitantly with their translocation across the cell membrane. Enzyme I transfers the phosphoryl group from phosphoenolpyruvate (PEP) to the phosphoryl carrier protein (HPr). The chain is Phosphoenolpyruvate-protein phosphotransferase (ptsI) from Geobacillus stearothermophilus (Bacillus stearothermophilus).